The sequence spans 266 residues: Undecaprenyl-diphosphatase (266 aa).

The next 7 membrane-spanning stretches (helical) occupy residues 41-61 (NLAFTIVVHVATVFSTLVILW), 82-102 (YVINILISMLPIGIVGVFFKD), 106-126 (AIFGSGLLIVGCMLLLTAALL), 140-160 (ISMKDAFIIGLAQACAVLPGL), 180-200 (LAQFSFLMVIPPILGEALLDG), 213-233 (IPTLSLIVGFIAAFVSGCLAC), and 245-265 (LIYFAIYCAIVGVVTIVVSQL).

Belongs to the UppP family.

It is found in the cell inner membrane. The enzyme catalyses di-trans,octa-cis-undecaprenyl diphosphate + H2O = di-trans,octa-cis-undecaprenyl phosphate + phosphate + H(+). Functionally, catalyzes the dephosphorylation of undecaprenyl diphosphate (UPP). Confers resistance to bacitracin. This chain is Undecaprenyl-diphosphatase, found in Bacteroides fragilis (strain YCH46).